A 96-amino-acid chain; its full sequence is Large ribosomal subunit protein eL14 (96 aa).

This sequence belongs to the eukaryotic ribosomal protein eL14 family.

The sequence is that of Large ribosomal subunit protein eL14 from Desulfurococcus amylolyticus (strain DSM 18924 / JCM 16383 / VKM B-2413 / 1221n) (Desulfurococcus kamchatkensis).